A 24-amino-acid chain; its full sequence is U4-ctenitoxin-Co1b (24 aa).

In terms of processing, disulfide bonds are present. In terms of tissue distribution, expressed by the venom gland.

Its subcellular location is the secreted. Functionally, omega-agatoxins are antagonists of voltage-gated calcium channels (Cav). In Ctenus ornatus (Brazilian spider), this protein is U4-ctenitoxin-Co1b.